The chain runs to 140 residues: ATP synthase epsilon chain (140 aa).

It belongs to the ATPase epsilon chain family. F-type ATPases have 2 components, CF(1) - the catalytic core - and CF(0) - the membrane proton channel. CF(1) has five subunits: alpha(3), beta(3), gamma(1), delta(1), epsilon(1). CF(0) has three main subunits: a, b and c.

Its subcellular location is the cell inner membrane. Functionally, produces ATP from ADP in the presence of a proton gradient across the membrane. The protein is ATP synthase epsilon chain of Bordetella bronchiseptica (strain ATCC BAA-588 / NCTC 13252 / RB50) (Alcaligenes bronchisepticus).